Reading from the N-terminus, the 282-residue chain is Pantothenate synthetase (282 aa).

ATP is bound at residue 26–33 (MGNLHEGH). The active-site Proton donor is the His33. Gln57 contributes to the (R)-pantoate binding site. Gln57 is a beta-alanine binding site. Residue 144–147 (GQKD) participates in ATP binding. Gln150 lines the (R)-pantoate pocket. Residues Leu173 and 181–184 (LSSR) contribute to the ATP site.

This sequence belongs to the pantothenate synthetase family. As to quaternary structure, homodimer.

It is found in the cytoplasm. It carries out the reaction (R)-pantoate + beta-alanine + ATP = (R)-pantothenate + AMP + diphosphate + H(+). It functions in the pathway cofactor biosynthesis; (R)-pantothenate biosynthesis; (R)-pantothenate from (R)-pantoate and beta-alanine: step 1/1. In terms of biological role, catalyzes the condensation of pantoate with beta-alanine in an ATP-dependent reaction via a pantoyl-adenylate intermediate. In Albidiferax ferrireducens (strain ATCC BAA-621 / DSM 15236 / T118) (Rhodoferax ferrireducens), this protein is Pantothenate synthetase.